A 130-amino-acid chain; its full sequence is Small ribosomal subunit protein uS9 (130 aa).

The interval 107 to 130 is disordered; the sequence is DARMKERKKPGLKKARKASQFSKR. A compositionally biased stretch (basic residues) spans 111 to 130; sequence KERKKPGLKKARKASQFSKR.

Belongs to the universal ribosomal protein uS9 family.

The sequence is that of Small ribosomal subunit protein uS9 from Ligilactobacillus salivarius (strain UCC118) (Lactobacillus salivarius).